A 60-amino-acid chain; its full sequence is MTCCNQQSSQPKTTTNCAESSCYKKTWRDFRGTRIERGCGCPQVKPGIKLECCHTNECNN.

Disulfide bonds link Cys-3–Cys-22, Cys-17–Cys-39, Cys-41–Cys-52, and Cys-53–Cys-58.

It belongs to the three-finger toxin family. Short-chain subfamily. Type I alpha-neurotoxin sub-subfamily. Expressed by the venom gland.

Its subcellular location is the secreted. In terms of biological role, binds to muscle nicotinic acetylcholine receptor (nAChR) and inhibit acetylcholine from binding to the receptor, thereby impairing neuromuscular transmission. The recombinant protein also barely blocks voltage-gated potassium channel Kv1.3/KCNA3 (2.71% inhibition at 60 nM of toxin). This is Short neurotoxin 1 from Hydrophis lapemoides (Persian gulf sea snake).